An 82-amino-acid chain; its full sequence is Immediate early response 3-interacting protein 1 (82 aa).

2 helical membrane-spanning segments follow: residues 2-22 and 62-82; these read AFTL…IAVL and VMRV…LLFG.

It belongs to the YOS1 family.

The protein localises to the endoplasmic reticulum membrane. In terms of biological role, regulator of endoplasmic reticulum secretion that acts as a key determinant of brain size. Required for secretion of extracellular matrix proteins. Required for correct brain development by depositing sufficient extracellular matrix proteins for tissue integrity and the proliferation of neural progenitors. Acts as a regulator of the unfolded protein response (UPR). In Danio rerio (Zebrafish), this protein is Immediate early response 3-interacting protein 1.